A 424-amino-acid polypeptide reads, in one-letter code: DNA repair protein Rad60 (424 aa).

Tyrosine 26 is modified (phosphotyrosine). Phosphoserine is present on residues serine 32 and serine 34. The segment at 45 to 177 is disordered; the sequence is LPKKSTKTGK…LTTTTSNSAS (133 aa). A compositionally biased stretch (basic residues) spans 48 to 57; that stretch reads KSTKTGKRKN. Over residues 77-93 the composition is skewed to basic and acidic residues; it reads QAEHKAVEPEEDMRTER. Phosphoserine is present on serine 96. The span at 104-123 shows a compositional bias: basic and acidic residues; the sequence is EMEKKNGQQSDVEKHAKEND. Over residues 156-166 the composition is skewed to basic residues; the sequence is KPKKRGQKKRT. Low complexity predominate over residues 167–177; the sequence is SLTTTTSNSAS.

As to quaternary structure, forms a complex with dgrn; likely required for localization to the nuclear periphery. Interacts with the SMC5-SMC6 complex members SMC5 and SMC6/jnj following ionizing radiation (IR) to induce DNA damage. Interaction between the SMC5-SMC6 complex and the dgrn-Rad60 complex, may stabilize the association of heterochromatic DSBs with the nuclear periphery.

The protein resides in the nucleus. It localises to the nucleoplasm. In terms of biological role, required for repair of DNA double strand breaks which occur during replication or are induced by ionizing radiation (IR). Functions with dgrn and downstream of the SMC5-SMC6 complex to regulate strand break repair. Likely functions by stabilizing the association of heterochromatic double strand breaks (DSBs) with the nuclear periphery as part of the homologous recombination (HR) repair process. In Drosophila melanogaster (Fruit fly), this protein is DNA repair protein Rad60.